The sequence spans 173 residues: MKKNRLLFRVIILLILCGAVGFTLYQGYFTKEEKMEIGKEAPNFVVTDLEGKKIELKDFKGKGVFLNFWGTWCKPCEKEMPYMNELYPKYKEKGVEIIALDADETDIAVKNFVKQYDLKFPVAIDKGGEIIKTYGVIPLPTSFLIDKDGKVIQEIKGEQTKEQLEEYLKKITP.

The helical; Signal-anchor for type II membrane protein transmembrane segment at 10-29 (VIILLILCGAVGFTLYQGYF) threads the bilayer. In terms of domain architecture, Thioredoxin spans 35–173 (MEIGKEAPNF…LEEYLKKITP (139 aa)). A disulfide bridge links cysteine 73 with cysteine 76.

This sequence belongs to the thioredoxin family. ResA subfamily.

It localises to the cell membrane. It participates in protein modification; cytochrome c assembly. Its function is as follows. Thiol-disulfide oxidoreductase which is required in disulfide reduction during c-type cytochrome synthesis. May accept reducing equivalents from CcdA, leading to breakage of disulfide bonds in apocytochrome c; following this reduction heme can be covalently attached. The sequence is that of Thiol-disulfide oxidoreductase ResA from Bacillus thuringiensis subsp. konkukian (strain 97-27).